The chain runs to 140 residues: Austinoid biosynthesis clusters protein S (140 aa).

Belongs to the trt14 isomerase family. Homodimer.

It functions in the pathway secondary metabolite biosynthesis; terpenoid biosynthesis. Its function is as follows. Part of the gene cluster B that mediates the biosynthesis of austinol and dehydroaustinol, two fungal meroterpenoids. The first step of the pathway is the synthesis of 3,5-dimethylorsellinic acid by the polyketide synthase ausA. 3,5-dimethylorsellinic acid is then prenylated by the polyprenyl transferase ausN. Further epoxidation by the FAD-dependent monooxygenase ausM and cyclization by the probable terpene cyclase ausL lead to the formation of protoaustinoid A. Protoaustinoid A is then oxidized to spiro-lactone preaustinoid A3 by the combined action of the FAD-binding monooxygenases ausB and ausC, and the dioxygenase ausE. Acid-catalyzed keto-rearrangement and ring contraction of the tetraketide portion of preaustinoid A3 by ausJ lead to the formation of preaustinoid A4. The aldo-keto reductase ausK, with the help of ausH, is involved in the next step by transforming preaustinoid A4 into isoaustinone which is in turn hydroxylated by the P450 monooxygenase ausI to form austinolide. Finally, the cytochrome P450 monooxygenase ausG modifies austinolide to austinol. Austinol can be further modified to dehydroaustinol which forms a diffusible complex with diorcinol that initiates conidiation. Due to genetic rearrangements of the clusters and the subsequent loss of some enzymes, the end products of the Emericella nidulans austinoid biosynthesis clusters are austinol and dehydroaustinol, even if additional enzymes, such as the O-acetyltransferase ausQ and the cytochrome P450 monooxygenase ausR are still functional. AusS is necessary for austinoids production and may play a possible function as a regulator. This is Austinoid biosynthesis clusters protein S from Emericella nidulans (strain FGSC A4 / ATCC 38163 / CBS 112.46 / NRRL 194 / M139) (Aspergillus nidulans).